The chain runs to 284 residues: MEMO1 family protein Saci_0089 (284 aa).

The protein belongs to the MEMO1 family.

In Sulfolobus acidocaldarius (strain ATCC 33909 / DSM 639 / JCM 8929 / NBRC 15157 / NCIMB 11770), this protein is MEMO1 family protein Saci_0089.